The primary structure comprises 608 residues: Histone-arginine methyltransferase CARM1 (608 aa).

The tract at residues 28–139 is interaction with C9orf72; the sequence is ATVSVFPGAR…GHTLERSVFS (112 aa). One can recognise an SAM-dependent MTase PRMT-type domain in the interval 147–454; the sequence is AVQYFQFYGY…KRQSYDISIV (308 aa). The S-adenosyl-L-methionine site is built by Gln-160, Arg-169, Gly-193, and Glu-215. Ser-217 carries the phosphoserine modification. A Glycyl lysine isopeptide (Lys-Gly) (interchain with G-Cter in ubiquitin) cross-link involves residue Lys-228. S-adenosyl-L-methionine-binding residues include Glu-244 and Ser-272. The required for nuclear translocation stretch occupies residues 347–380; sequence RILMAKSVKYTVNFLEAKEGDLHRIEIPFKFHML. Positions 500–608 are transactivation domain; that stretch reads TGSTYNLSSG…IPTNTMHYGS (109 aa). Arg-551 carries the dimethylated arginine modification.

This sequence belongs to the class I-like SAM-binding methyltransferase superfamily. Protein arginine N-methyltransferase family. In terms of assembly, homodimer. Interacts with NR1H4. Interacts with SNRPC. Interacts with the C-terminus of NCOA2/GRIP1, NCO3/ACTR and NCOA1/SRC1. Part of a complex consisting of CARM1, EP300/P300 and NCOA2/GRIP1. Interacts with FLII, TP53, myogenic factor MEF2, EP300/P300, TRIM24, CREBBP and CTNNB1. Interacts with RELA. Identified in a complex containing CARM1, TRIM24 and NCOA2/GRIP1. Interacts with NCOA3/SRC3. Interacts with SKP2. Interacts (via PH domain-like fold) with C9orf72. Interacts with PARP1; promoting PARP1 recruimtent to replication forks. In terms of processing, phosphorylation at Ser-217 is strongly increased during mitosis, and decreases rapidly to a very low, basal level after entry into the G1 phase of the cell cycle. Phosphorylation at Ser-217 interferes with S-adenosyl-L-methionine binding and strongly reduces methyltransferase activity. Phosphorylation at Ser-217 may promote cytosolic location. Post-translationally, auto-methylated on Arg-551. Methylation enhances transcription coactivator activity. Methylation is required for its role in the regulation of pre-mRNA alternative splicing. Ubiquitinated by E3 ubiquitin-protein ligase complex containing FBXO9 at Lys-228; leading to proteasomal degradation. Ubiquitously expressed. Within the brain, present in proliferating cells from lateral ventricular zone and dentate gyrus (at protein level).

It is found in the nucleus. The protein localises to the cytoplasm. Its subcellular location is the chromosome. The enzyme catalyses L-arginyl-[protein] + 2 S-adenosyl-L-methionine = N(omega),N(omega)-dimethyl-L-arginyl-[protein] + 2 S-adenosyl-L-homocysteine + 2 H(+). Its activity is regulated as follows. Methylation of H3R17 (H3R17me) by CARM1 is stimulated by preacetylation of H3 'Lys-18' (H3K18ac) H3 'Lys-23' (H3K23ac) by EP300 and blocked by citrullination of H3 'Arg-17' (H3R17ci) by PADI4. Its function is as follows. Methylates (mono- and asymmetric dimethylation) the guanidino nitrogens of arginyl residues in several proteins involved in DNA packaging, transcription regulation, pre-mRNA splicing, and mRNA stability. Recruited to promoters upon gene activation together with histone acetyltransferases from EP300/P300 and p160 families, methylates histone H3 at 'Arg-17' (H3R17me), forming mainly asymmetric dimethylarginine (H3R17me2a), leading to activation of transcription via chromatin remodeling. During nuclear hormone receptor activation and TCF7L2/TCF4 activation, acts synergically with EP300/P300 and either one of the p160 histone acetyltransferases NCOA1/SRC1, NCOA2/GRIP1 and NCOA3/ACTR or CTNNB1/beta-catenin to activate transcription. During myogenic transcriptional activation, acts together with NCOA3/ACTR as a coactivator for MEF2C. During monocyte inflammatory stimulation, acts together with EP300/P300 as a coactivator for NF-kappa-B. Acts as a coactivator for PPARG, promotes adipocyte differentiation and the accumulation of brown fat tissue. Plays a role in the regulation of pre-mRNA alternative splicing by methylation of splicing factors. Also seems to be involved in p53/TP53 transcriptional activation. Methylates EP300/P300, both at 'Arg-2142', which may loosen its interaction with NCOA2/GRIP1, and at 'Arg-580' and 'Arg-604' in the KIX domain, which impairs its interaction with CREB and inhibits CREB-dependent transcriptional activation. Also methylates arginine residues in RNA-binding proteins PABPC1, ELAVL1 and ELAV4, which may affect their mRNA-stabilizing properties and the half-life of their target mRNAs. Acts as a transcriptional coactivator of ACACA/acetyl-CoA carboxylase by enriching H3R17 methylation at its promoter, thereby positively regulating fatty acid synthesis. Independently of its methyltransferase activity, involved in replication fork progression: promotes PARP1 recruitment to replication forks, leading to poly-ADP-ribosylation of chromatin at replication forks and reduced fork speed. This is Histone-arginine methyltransferase CARM1 (Carm1) from Mus musculus (Mouse).